We begin with the raw amino-acid sequence, 301 residues long: Tetrapeptide repeat homeobox protein 2 (301 aa).

Disordered regions lie at residues 1 to 27 (MQDP…RTVY) and 273 to 301 (SLST…LLDL). Composition is skewed to basic and acidic residues over residues 16–26 (PPRRQRQERTV) and 281–292 (YKEEDGFVDKNH). The homeobox DNA-binding region spans 20–79 (QRQERTVYTESQQKVLEFYFQKDQYPNYDQRLNLAEMLSLREQQLQVWFKNRRAKLARER).

The protein belongs to the paired homeobox family.

The protein localises to the nucleus. In terms of biological role, transcription factor expressed after fertilization required for zygotic genome activation (ZGA), a critical event in early embryonic development during which the developmental control passes from maternally provided mRNAs to the expression of the zygotic genome after fertilization. Binds and activates expression of key ZGA marker genes, such as NANOGNB, ZSCAN4, DUXB, KLF5 and DPPA3. Binds to regulatory DNA sequences containing a 5'-TAATCC-3' sequence motif. The sequence is that of Tetrapeptide repeat homeobox protein 2 from Homo sapiens (Human).